We begin with the raw amino-acid sequence, 676 residues long: Zinc finger CCCH domain-containing protein 38 (676 aa).

Disordered regions lie at residues 1-134 (MEMS…DHLF), 172-217 (SSDY…RSSN), 245-307 (RKQP…SWID), 487-506 (SVQP…NPNQ), and 533-594 (IQEV…DPKG). Over residues 12–21 (SKWDSKEDTH) the composition is skewed to basic and acidic residues. The span at 58–79 (RVSQNNDNSYFSEQDGTRQQFV) shows a compositional bias: polar residues. Composition is skewed to basic and acidic residues over residues 101–110 (ARRDAGSYDR), 124–134 (EFNKRGSDHLF), and 192–212 (SEFT…EGGF). A C3H1-type zinc finger spans residues 214–243 (RSSNIPCKFFAAGTGFCRNGKYCRFSHHVA). Residues 251–262 (NNNNFYRQDNNN) are compositionally biased toward low complexity. Positions 269-278 (KWNDVERLDN) are enriched in basic and acidic residues. Basic and acidic residues predominate over residues 538–562 (LDPKENGDKKTDEASKEEEGKKTGE). Positions 563–583 (DTNDAENVVDEDEDGDDDGSD) are enriched in acidic residues. A compositionally biased stretch (basic and acidic residues) spans 584–594 (EENKKEKDPKG).

The polypeptide is Zinc finger CCCH domain-containing protein 38 (Arabidopsis thaliana (Mouse-ear cress)).